A 123-amino-acid chain; its full sequence is Small ribosomal subunit protein uS12 (123 aa).

A 3-methylthioaspartic acid modification is found at Asp89.

It belongs to the universal ribosomal protein uS12 family. Part of the 30S ribosomal subunit. Contacts proteins S8 and S17. May interact with IF1 in the 30S initiation complex.

In terms of biological role, with S4 and S5 plays an important role in translational accuracy. Its function is as follows. Interacts with and stabilizes bases of the 16S rRNA that are involved in tRNA selection in the A site and with the mRNA backbone. Located at the interface of the 30S and 50S subunits, it traverses the body of the 30S subunit contacting proteins on the other side and probably holding the rRNA structure together. The combined cluster of proteins S8, S12 and S17 appears to hold together the shoulder and platform of the 30S subunit. The chain is Small ribosomal subunit protein uS12 from Chelativorans sp. (strain BNC1).